A 463-amino-acid chain; its full sequence is ATP synthase subunit beta (463 aa).

152 to 159 (GGAGVGKT) contributes to the ATP binding site.

Belongs to the ATPase alpha/beta chains family. F-type ATPases have 2 components, CF(1) - the catalytic core - and CF(0) - the membrane proton channel. CF(1) has five subunits: alpha(3), beta(3), gamma(1), delta(1), epsilon(1). CF(0) has three main subunits: a(1), b(2) and c(9-12). The alpha and beta chains form an alternating ring which encloses part of the gamma chain. CF(1) is attached to CF(0) by a central stalk formed by the gamma and epsilon chains, while a peripheral stalk is formed by the delta and b chains.

It localises to the cell inner membrane. The enzyme catalyses ATP + H2O + 4 H(+)(in) = ADP + phosphate + 5 H(+)(out). In terms of biological role, produces ATP from ADP in the presence of a proton gradient across the membrane. The catalytic sites are hosted primarily by the beta subunits. The sequence is that of ATP synthase subunit beta from Shewanella denitrificans (strain OS217 / ATCC BAA-1090 / DSM 15013).